A 533-amino-acid polypeptide reads, in one-letter code: Beta-1,2-xylosyltransferase RCN11 (533 aa).

Topologically, residues 1 to 23 (MMPVRTYHHHHHHNNSNNHRLRR) are cytoplasmic. Residues 24–44 (IIPRVLLAVFAIYAVSFAAYL) form a helical; Signal-anchor for type II membrane protein membrane-spanning segment. The Lumenal segment spans residues 45-533 (LRHQSPHPHP…LSNILKGFGC (489 aa)). Residues 51–78 (HPHPHPAADPERDAVDAAGGGGGGGAVD) form a disordered region. Positions 56–65 (PAADPERDAV) are enriched in basic and acidic residues. N-linked (GlcNAc...) asparagine glycans are attached at residues Asn307 and Asn313.

It belongs to the glycosyltransferase 61 family. As to expression, expressed at the base of the crown roots and in the basal region of the shoot, which contains the shoot and axillary meristems.

It localises to the golgi apparatus membrane. Its pathway is glycan metabolism. Glycosyltransferase involved in the xylosylation of N-glycans. Possesses beta-1,2-xylosyltransferase activity, transferring xylose from UDP-xylose to the core beta-linked mannose of N-glycans. Beta-1,2-linked xylose residues on N-glycans are critical for seed germination and plant development and growth under conditions of abiotic stress. In Oryza sativa subsp. japonica (Rice), this protein is Beta-1,2-xylosyltransferase RCN11.